The chain runs to 386 residues: MSPDGELVPVDSSAVVTAKRKTSQLSRSWISIDATGQKTVLDVDKHVIMHRVQIHARDLRILDPNLFYPSAILGRERAIVLNLEHIKAIITAEEVLIRDSSDENVIPVLEEFQRRLPVGNEAHGVHGDGDLGEEDESPFEFRALEVALEAICSFLAARTTELEKFAYPALDELTLKISSRNLERVRKLKSAMTRLTARVQKVRDELEQLLDDDGDMADLYLTRKLVGASSSVSVSDEPIWYPTSPTIGSMISRASRVSLVTVRGDDETDVEELEMLLEAYFMQIDSTLNKLTELREYIDDTEDYINIQLDNHRNQLIQLELMLSAGTVCVSVYSMIAGIFGMNIPNTWNHDHGYIFKWVVSLTGTFCIVLFVIILSYARFRGLIGS.

The next 2 helical transmembrane spans lie at 321-341 (LMLSAGTVCVSVYSMIAGIFG) and 355-375 (IFKWVVSLTGTFCIVLFVIIL). The short motif at 341-343 (GMN) is the Required for magnesium transport activity element.

It belongs to the CorA metal ion transporter (MIT) (TC 1.A.35.5) family. In terms of tissue distribution, isoform 1 is expressed in the whole plant. Isoform 4 is expressed only in roots and flowers.

It is found in the endoplasmic reticulum membrane. In terms of biological role, low-affinity magnesium transporter that mediates the influx of magnesium. This Arabidopsis thaliana (Mouse-ear cress) protein is Magnesium transporter MRS2-7 (MRS2-7).